The chain runs to 359 residues: 5-formaminoimidazole-4-carboxamide-1-(beta)-D-ribofuranosyl 5'-monophosphate synthetase (359 aa).

5-amino-1-(5-phospho-beta-D-ribosyl)imidazole-4-carboxamide contacts are provided by His-28 and Ser-95. One can recognise an ATP-grasp domain in the interval 115 to 346 (ELMIWETDRD…MGRRIAREIK (232 aa)). ATP contacts are provided by residues 144-206 (PEEI…ANIY) and Glu-228. Asn-256 provides a ligand contact to 5-amino-1-(5-phospho-beta-D-ribosyl)imidazole-4-carboxamide. Glu-295 and Glu-308 together coordinate Mg(2+).

Belongs to the phosphohexose mutase family. It depends on Mg(2+) as a cofactor. The cofactor is Mn(2+).

The catalysed reaction is 5-amino-1-(5-phospho-beta-D-ribosyl)imidazole-4-carboxamide + formate + ATP = 5-formamido-1-(5-phospho-D-ribosyl)imidazole-4-carboxamide + ADP + phosphate. Its pathway is purine metabolism; IMP biosynthesis via de novo pathway; 5-formamido-1-(5-phospho-D-ribosyl)imidazole-4-carboxamide from 5-amino-1-(5-phospho-D-ribosyl)imidazole-4-carboxamide (formate route): step 1/1. Its function is as follows. Catalyzes the ATP- and formate-dependent formylation of 5-aminoimidazole-4-carboxamide-1-beta-d-ribofuranosyl 5'-monophosphate (AICAR) to 5-formaminoimidazole-4-carboxamide-1-beta-d-ribofuranosyl 5'-monophosphate (FAICAR) in the absence of folates. The polypeptide is 5-formaminoimidazole-4-carboxamide-1-(beta)-D-ribofuranosyl 5'-monophosphate synthetase (Archaeoglobus fulgidus (strain ATCC 49558 / DSM 4304 / JCM 9628 / NBRC 100126 / VC-16)).